Here is a 366-residue protein sequence, read N- to C-terminus: MRVEGKPYTTIWTGEDGASIKIIDQTRLPHRFEIIAISDVEAAARAIAEMWVRGAPLIGVTAAYGLALAMRADPSDANLERASAHLKATRPTAVNLQWAVDRVRRLIESAPPPQRFAAAFAEAGVIARDDIALCEAIGMHGLSLIKTIAAGKPPGAPVNVLTHCNAGWLATVDWGTATAPVYKAHDAGLAVHVYVDETRPRNQGAALTAFELGQHGVPHTVIVDNAGGHLMQHGGIDMVIVGTDRTTASGDVCNKIGTYLKALAARDNNIPFYVAAPSPSIDFSIADGVREVPIEIRSEAEVTHISGLSADGEITRVRLTPEGSRALNPAFDVTPARLVTGLITERGVIKANASALAAAFRERVAG.

Substrate is bound by residues 53–55 (RGA), arginine 90, and glutamine 203. Aspartate 244 (proton donor) is an active-site residue. A substrate-binding site is contributed by 254–255 (NK).

The protein belongs to the eIF-2B alpha/beta/delta subunits family. MtnA subfamily.

The enzyme catalyses 5-(methylsulfanyl)-alpha-D-ribose 1-phosphate = 5-(methylsulfanyl)-D-ribulose 1-phosphate. It participates in amino-acid biosynthesis; L-methionine biosynthesis via salvage pathway; L-methionine from S-methyl-5-thio-alpha-D-ribose 1-phosphate: step 1/6. Catalyzes the interconversion of methylthioribose-1-phosphate (MTR-1-P) into methylthioribulose-1-phosphate (MTRu-1-P). This is Methylthioribose-1-phosphate isomerase from Methylocella silvestris (strain DSM 15510 / CIP 108128 / LMG 27833 / NCIMB 13906 / BL2).